The sequence spans 516 residues: Citrate synthase, glyoxysomal (516 aa).

The transit peptide at 1–43 (MPTDMELSPSNVARHRLAVLAAHLSAASLEPPVMASSLEAHCV) directs the protein to the glyoxysome. Catalysis depends on residues His329, His368, and Asp424.

This sequence belongs to the citrate synthase family.

The protein localises to the glyoxysome. The catalysed reaction is oxaloacetate + acetyl-CoA + H2O = citrate + CoA + H(+). The protein operates within carbohydrate metabolism; glyoxylate cycle; isocitrate from oxaloacetate: step 1/2. This Cucurbita maxima (Pumpkin) protein is Citrate synthase, glyoxysomal.